Here is a 323-residue protein sequence, read N- to C-terminus: Putative CRISPR-associated protein SSO1401 (323 aa).

Sometimes seen associated with the aCascade ribonucleoprotein complex, minimally composed of Csa2 and Cas5a, which binds crRNA. Other probable components of aCascade in strain P1 are Cas6 and Csa5, while SSO1399, Cas5b (SSO1400) and SSO1401 have sometimes been seen weakly associated. The Csa2-Cas5a-crRNA complex also binds target DNA homologous to crRNA, probably forming an R-loop. Purified aCascade forms a filament about 6 nm in width.

In terms of biological role, CRISPR (clustered regularly interspaced short palindromic repeat) is an adaptive immune system that provides protection against mobile genetic elements (viruses, transposable elements and conjugative plasmids). CRISPR clusters contain spacers, sequences complementary to antecedent mobile elements, and target invading nucleic acids. CRISPR clusters are transcribed and processed into CRISPR RNA (crRNA). This is Putative CRISPR-associated protein SSO1401 from Saccharolobus solfataricus (strain ATCC 35092 / DSM 1617 / JCM 11322 / P2) (Sulfolobus solfataricus).